A 21-amino-acid chain; its full sequence is EQQCTPGQTKKEDCNNCTSGD.

The Pacifastin domain occupies 1–21 (EQQCTPGQTKKEDCNNCTSGD). A disordered region spans residues 1 to 21 (EQQCTPGQTKKEDCNNCTSGD).

This sequence belongs to the protease inhibitor I19 family. In terms of tissue distribution, expressed in hemolymph.

The protein localises to the secreted. Functionally, probable serine protease inhibitor. In Melanoplus sanguinipes (Migratory grasshopper), this protein is Serine protease inhibitor 1.